The sequence spans 1098 residues: Tudor domain-containing protein 7 (1098 aa).

HTH OST-type domains follow at residues 3 to 76 (EGDL…YAMA) and 233 to 302 (KMDE…YPAK). A Phosphoserine modification is found at Ser319. Residues 337–406 (MAGDFKEKVA…PQKAILYAKL (70 aa)) form the HTH OST-type 3 domain. 2 Tudor domains span residues 513 to 570 (AVNV…FCSL) and 703 to 760 (LPFC…FLQE). Position 859 is a phosphoserine (Ser859). Residues 861-1098 (NSKNGNMRVS…EYLIELSKVN (238 aa)) form an interaction with CDK17 region. Residues 893 to 1098 (TSSFSTEELP…EYLIELSKVN (206 aa)) form an interaction with CABLES1 region.

This sequence belongs to the TDRD7 family. Found in a mRNP complex, at least composed of TDRD1, TDRD6, TDRD7 and DDX4. Found in a complex containing CABLES1, CDK16 and CDK17. Interacts with CABLES1, CDK17 and PIWIL1.

Its subcellular location is the cytoplasm. Functionally, component of specific cytoplasmic RNA granules involved in post-transcriptional regulation of specific genes: probably acts by binding to specific mRNAs and regulating their translation. Required for lens transparency during lens development, by regulating translation of genes such as CRYBB3 and HSPB1 in the developing lens. Also required during spermatogenesis. The protein is Tudor domain-containing protein 7 (TDRD7) of Pongo abelii (Sumatran orangutan).